We begin with the raw amino-acid sequence, 397 residues long: F-box protein At3g28330 (397 aa).

Positions 6 to 56 (KKDMDFLTEDLWEIILARLPLKSIITTPKLVCKVWKSIIESRCFRDLFQSL) constitute an F-box domain.

This Arabidopsis thaliana (Mouse-ear cress) protein is F-box protein At3g28330.